The sequence spans 89 residues: Small ribosomal subunit protein uS15 (89 aa).

The protein belongs to the universal ribosomal protein uS15 family. As to quaternary structure, part of the 30S ribosomal subunit. Forms a bridge to the 50S subunit in the 70S ribosome, contacting the 23S rRNA.

Its function is as follows. One of the primary rRNA binding proteins, it binds directly to 16S rRNA where it helps nucleate assembly of the platform of the 30S subunit by binding and bridging several RNA helices of the 16S rRNA. Forms an intersubunit bridge (bridge B4) with the 23S rRNA of the 50S subunit in the ribosome. The polypeptide is Small ribosomal subunit protein uS15 (Cyanothece sp. (strain PCC 7425 / ATCC 29141)).